Consider the following 858-residue polypeptide: Alanine--tRNA ligase (858 aa).

Positions 550, 554, 652, and 656 each coordinate Zn(2+).

It belongs to the class-II aminoacyl-tRNA synthetase family. Requires Zn(2+) as cofactor.

It is found in the cytoplasm. It catalyses the reaction tRNA(Ala) + L-alanine + ATP = L-alanyl-tRNA(Ala) + AMP + diphosphate. In terms of biological role, catalyzes the attachment of alanine to tRNA(Ala) in a two-step reaction: alanine is first activated by ATP to form Ala-AMP and then transferred to the acceptor end of tRNA(Ala). Also edits incorrectly charged Ser-tRNA(Ala) and Gly-tRNA(Ala) via its editing domain. This Pseudothermotoga lettingae (strain ATCC BAA-301 / DSM 14385 / NBRC 107922 / TMO) (Thermotoga lettingae) protein is Alanine--tRNA ligase.